The primary structure comprises 187 residues: UPF0301 protein VSAL_I0547 (187 aa).

Belongs to the UPF0301 (AlgH) family.

This Aliivibrio salmonicida (strain LFI1238) (Vibrio salmonicida (strain LFI1238)) protein is UPF0301 protein VSAL_I0547.